Here is a 279-residue protein sequence, read N- to C-terminus: Protoheme IX farnesyltransferase (279 aa).

A run of 9 helical transmembrane segments spans residues 5 to 25 (LILL…AGYL), 33 to 53 (IAQA…AAAF), 84 to 103 (LAYS…LLLG), 108 to 125 (LFVF…TVIL), 133 to 153 (ILGG…LGAG), 159 to 179 (AVLI…ALAY), 201 to 221 (AAVA…MTLY), 222 to 242 (LAFG…VATI), and 256 to 276 (AMWK…LALI).

It belongs to the UbiA prenyltransferase family. Protoheme IX farnesyltransferase subfamily.

The protein localises to the cell membrane. The catalysed reaction is heme b + (2E,6E)-farnesyl diphosphate + H2O = Fe(II)-heme o + diphosphate. The protein operates within porphyrin-containing compound metabolism; heme O biosynthesis; heme O from protoheme: step 1/1. In terms of biological role, converts heme B (protoheme IX) to heme O by substitution of the vinyl group on carbon 2 of heme B porphyrin ring with a hydroxyethyl farnesyl side group. This is Protoheme IX farnesyltransferase from Pyrobaculum arsenaticum (strain DSM 13514 / JCM 11321 / PZ6).